We begin with the raw amino-acid sequence, 109 residues long: Large ribosomal subunit protein uL24 (109 aa).

The disordered stretch occupies residues 85–109; it reads KYGTDPKTNKKVRLSRKTNNLVGGQ.

The protein belongs to the universal ribosomal protein uL24 family. In terms of assembly, part of the 50S ribosomal subunit.

Functionally, one of two assembly initiator proteins, it binds directly to the 5'-end of the 23S rRNA, where it nucleates assembly of the 50S subunit. One of the proteins that surrounds the polypeptide exit tunnel on the outside of the subunit. The polypeptide is Large ribosomal subunit protein uL24 (Mycoplasmoides gallisepticum (strain R(low / passage 15 / clone 2)) (Mycoplasma gallisepticum)).